We begin with the raw amino-acid sequence, 273 residues long: Ribosomal RNA small subunit methyltransferase A (273 aa).

The S-adenosyl-L-methionine site is built by Asn-18, Leu-20, Gly-45, Glu-66, Asp-91, and Asn-113.

This sequence belongs to the class I-like SAM-binding methyltransferase superfamily. rRNA adenine N(6)-methyltransferase family. RsmA subfamily.

It localises to the cytoplasm. It carries out the reaction adenosine(1518)/adenosine(1519) in 16S rRNA + 4 S-adenosyl-L-methionine = N(6)-dimethyladenosine(1518)/N(6)-dimethyladenosine(1519) in 16S rRNA + 4 S-adenosyl-L-homocysteine + 4 H(+). Functionally, specifically dimethylates two adjacent adenosines (A1518 and A1519) in the loop of a conserved hairpin near the 3'-end of 16S rRNA in the 30S particle. May play a critical role in biogenesis of 30S subunits. The protein is Ribosomal RNA small subunit methyltransferase A of Klebsiella pneumoniae (strain 342).